A 570-amino-acid chain; its full sequence is Vacuolar protein sorting-associated protein 45 (570 aa).

Phosphoserine occurs at positions 307 and 441.

This sequence belongs to the STXBP/unc-18/SEC1 family. In terms of assembly, interacts with STX6. Interacts with ZFYVE20. Ubiquitous. Expression was highest in testis, heart and brain, intermediate in kidney, spleen, prostate, ovary, small intestine and thymus and low in lung, skeletal muscle, placenta, colon, pancreas, peripheral blood leukocytes and liver.

It is found in the golgi apparatus membrane. The protein localises to the endosome membrane. Functionally, may play a role in vesicle-mediated protein trafficking from the Golgi stack through the trans-Golgi network. This is Vacuolar protein sorting-associated protein 45 (VPS45) from Homo sapiens (Human).